The primary structure comprises 622 residues: Probable potassium transport system protein Kup (622 aa).

Helical transmembrane passes span 9 to 29, 52 to 72, 101 to 121, 137 to 157, 169 to 189, 213 to 233, 247 to 267, 287 to 309, 337 to 357, 363 to 383, 396 to 416, and 419 to 439; these read LPAV…TSPL, FLSL…LAFV, VLLV…VITP, PALT…LFVI, FGPV…ISIF, VAFF…ALYA, WFTV…ALIL, FPMV…SGVF, IYIP…VVTF, LAAA…ILAC, VVKI…LANV, and FFAG…VMAT.

The protein belongs to the HAK/KUP transporter (TC 2.A.72) family.

The protein localises to the cell inner membrane. It carries out the reaction K(+)(in) + H(+)(in) = K(+)(out) + H(+)(out). Functionally, transport of potassium into the cell. Likely operates as a K(+):H(+) symporter. This is Probable potassium transport system protein Kup from Tolumonas auensis (strain DSM 9187 / NBRC 110442 / TA 4).